Consider the following 732-residue polypeptide: Calcineurin-interacting protein 2 (732 aa).

6 disordered regions span residues 1-24 (MNRGYDSYNRSRSTSSRPLDREPY), 115-169 (DYEP…ALPK), 181-232 (QKKD…LDDR), 310-351 (ILSR…TSRR), 372-397 (RSQSLRQSRISEHSKRSLGKTTSTVS), and 426-708 (QTVT…PLEE). The span at 8 to 17 (YNRSRSTSSR) shows a compositional bias: polar residues. A compositionally biased stretch (basic and acidic residues) spans 117–129 (EPLRKEPELKEQK). Polar residues-rich tracts occupy residues 151-163 (SGITLSPSDSSRT) and 189-208 (IPRQVSSADSQRTIRNNNEL). Residues 312-323 (SRSVSTSPSSVT) show a composition bias toward low complexity. The span at 324–351 (DNIPKTSTSRIPSSENPKTMEHTTTSRR) shows a compositional bias: polar residues. Residues 426 to 439 (QTVTNVRVPSSRGS) show a composition bias toward polar residues. Composition is skewed to basic and acidic residues over residues 526-538 (QSPEELDYGRFAD) and 546-557 (PGDHQAREEDLP). Residues 607–619 (SVTPSEKSLPRNS) are compositionally biased toward polar residues. A compositionally biased stretch (low complexity) spans 688–705 (NSPNKSSSSSKARPSAAP).

As to quaternary structure, interacts with tax-6. Expressed in intestine.

This is Calcineurin-interacting protein 2 from Caenorhabditis elegans.